A 123-amino-acid polypeptide reads, in one-letter code: Large ribosomal subunit protein uL29 (123 aa).

Residue Lys-19 is modified to N6-acetyllysine. Lys-25 participates in a covalent cross-link: Glycyl lysine isopeptide (Lys-Gly) (interchain with G-Cter in SUMO2). Ser-29 carries the post-translational modification Phosphoserine. At Lys-43 the chain carries N6-acetyllysine.

The protein belongs to the universal ribosomal protein uL29 family. Component of the large ribosomal subunit.

The protein resides in the cytoplasm. Its function is as follows. Component of the large ribosomal subunit. The ribosome is a large ribonucleoprotein complex responsible for the synthesis of proteins in the cell. The sequence is that of Large ribosomal subunit protein uL29 (RPL35) from Sus scrofa (Pig).